A 431-amino-acid chain; its full sequence is Histidine--tRNA ligase (431 aa).

This sequence belongs to the class-II aminoacyl-tRNA synthetase family. Homodimer.

Its subcellular location is the cytoplasm. The catalysed reaction is tRNA(His) + L-histidine + ATP = L-histidyl-tRNA(His) + AMP + diphosphate + H(+). In Limosilactobacillus fermentum (strain NBRC 3956 / LMG 18251) (Lactobacillus fermentum), this protein is Histidine--tRNA ligase.